Here is a 1052-residue protein sequence, read N- to C-terminus: Error-prone DNA polymerase (1052 aa).

Belongs to the DNA polymerase type-C family. DnaE2 subfamily.

The protein resides in the cytoplasm. The enzyme catalyses DNA(n) + a 2'-deoxyribonucleoside 5'-triphosphate = DNA(n+1) + diphosphate. In terms of biological role, DNA polymerase involved in damage-induced mutagenesis and translesion synthesis (TLS). It is not the major replicative DNA polymerase. The protein is Error-prone DNA polymerase of Bordetella parapertussis (strain 12822 / ATCC BAA-587 / NCTC 13253).